The chain runs to 483 residues: MRAQPAASHFVDGRPLEDETGAPIPVIYPATGEEIARLHEATPAVIEAALASGARAQAAWAAMRPVERARILRRASDLIRARNEELSLLETLDTGKPLQETLVADWASGADALEFFAGLAPAVTGETVPLGQDFVYTIREPLGLCVGIGAWNYPSQIACWKAAPALALGNAMVFKPSEVTPLGALKLAEILIEAGLPPGLFNVVQGRGGVGAALVTDSRVAKVSLTGSVPTGRRVYAAAAEGVRHVTMELGGKSPLIVFDDADLESAIGAAMLGNFYSAGQICSNGTRVFVQKGIKEAFLARLAERADAIRMGDPLDPEVQMGPLVSQAQLEKVLAYIEKARAEGGRLVCGGEASVSPGCYVQPTVFADVTDAMTLACEEVFGPVMAVLDFETEEEAIARANATDFGLAAGVFTADLTRAHRVVAQLQAGTCWINAYNLTPVEAPFGGVKLSGVGRENGRAAVEHYTQVKSVYVGMGPVDAPY.

K(+) is bound by residues isoleucine 27 and aspartate 93. Residue 149–151 (GAW) participates in NAD(+) binding. Lysine 161 functions as the Charge relay system in the catalytic mechanism. Residue 175 to 178 (KPSE) coordinates NAD(+). Valine 179 contacts K(+). Position 228-231 (228-231 (SVPT)) interacts with NAD(+). Valine 243 contacts K(+). The Proton acceptor role is filled by glutamate 249. NAD(+) contacts are provided by glycine 251, cysteine 283, and glutamate 380. Cysteine 283 serves as the catalytic Nucleophile. Position 283 is a cysteine sulfenic acid (-SOH) (cysteine 283). Residues lysine 450 and glycine 453 each contribute to the K(+) site. Residue glutamate 457 is the Charge relay system of the active site.

This sequence belongs to the aldehyde dehydrogenase family. As to quaternary structure, dimer of dimers. It depends on K(+) as a cofactor.

It catalyses the reaction betaine aldehyde + NAD(+) + H2O = glycine betaine + NADH + 2 H(+). The protein operates within amine and polyamine biosynthesis; betaine biosynthesis via choline pathway; betaine from betaine aldehyde: step 1/1. Functionally, involved in the biosynthesis of the osmoprotectant glycine betaine. Catalyzes the irreversible oxidation of betaine aldehyde to the corresponding acid. The protein is Betaine aldehyde dehydrogenase of Cereibacter sphaeroides (strain KD131 / KCTC 12085) (Rhodobacter sphaeroides).